The chain runs to 183 residues: Large ribosomal subunit protein uL6 (183 aa).

Belongs to the universal ribosomal protein uL6 family. In terms of assembly, part of the 50S ribosomal subunit.

Its function is as follows. This protein binds to the 23S rRNA, and is important in its secondary structure. It is located near the subunit interface in the base of the L7/L12 stalk, and near the tRNA binding site of the peptidyltransferase center. This chain is Large ribosomal subunit protein uL6, found in Porphyromonas gingivalis (strain ATCC 33277 / DSM 20709 / CIP 103683 / JCM 12257 / NCTC 11834 / 2561).